A 22-amino-acid chain; its full sequence is thr operon leader peptide (22 aa).

Positions 1 to 22 are disordered; the sequence is MRNISLTTTIITTTDTTGNGAG. Residues 7-22 show a composition bias toward low complexity; the sequence is TTTIITTTDTTGNGAG.

This sequence belongs to the thr operon leader peptide family.

Functionally, this protein is involved in control of the biosynthesis of threonine. This Serratia marcescens protein is thr operon leader peptide.